An 80-amino-acid polypeptide reads, in one-letter code: Conotoxin Lt6.2 (80 aa).

An N-terminal signal peptide occupies residues 1–24; sequence MKLTRVLIIAVLFLTAYQLTTVET. The propeptide occupies 25 to 47; it reads YSRGKWMHRALRSTGKNPKVTRE. 3 disulfide bridges follow: Cys48-Cys62, Cys55-Cys66, and Cys61-Cys73.

It belongs to the conotoxin O1 superfamily. As to expression, expressed by the venom duct.

It is found in the secreted. The protein is Conotoxin Lt6.2 of Conus litteratus (Lettered cone).